Reading from the N-terminus, the 135-residue chain is Methylglyoxal synthase (135 aa).

Residues 1 to 135 (MPKRRRIALI…AQPDPKEIHA (135 aa)) form the MGS-like domain. Substrate is bound by residues His-12, Lys-16, 38 to 41 (TGTT), and 58 to 59 (SG). Asp-64 serves as the catalytic Proton donor/acceptor. His-91 serves as a coordination point for substrate.

This sequence belongs to the methylglyoxal synthase family.

The catalysed reaction is dihydroxyacetone phosphate = methylglyoxal + phosphate. Functionally, catalyzes the formation of methylglyoxal from dihydroxyacetone phosphate. The chain is Methylglyoxal synthase from Ralstonia nicotianae (strain ATCC BAA-1114 / GMI1000) (Ralstonia solanacearum).